The sequence spans 524 residues: L-tyrosine:2-oxoglutarate aminotransferase atrD (524 aa).

It belongs to the class-I pyridoxal-phosphate-dependent aminotransferase family. It depends on pyridoxal 5'-phosphate as a cofactor.

The enzyme catalyses L-tyrosine + 2-oxoglutarate = 3-(4-hydroxyphenyl)pyruvate + L-glutamate. The protein operates within secondary metabolite biosynthesis. The L-tyrosine:2-oxoglutarate aminotransferase atrD and the atromentin synthetase atrA catalyze consecutive steps to turn over L-tyrosine into atromentin, which represents the generic precursor molecule for the entire terphenylquinone and pulvinic acid family of pigments, which are widely distributed secondary metabolites in homobasidiomycetes. The first step is catalyzed by atrD which converts L-tyrosine in to 4-hydroxyphenylpyruvate (4-HPP). Adenylation of two 4-HPP monomers by the atrA adenylation (A) domain, ester bond formation between monomers and atrA, and symmetric C-C-bond formation between two monomers by atrA leads to atromentin. In Tapinella panuoides (Oyster rollrim mushroom), this protein is L-tyrosine:2-oxoglutarate aminotransferase atrD.